Consider the following 143-residue polypeptide: Peptide methionine sulfoxide reductase MsrB (143 aa).

Residues 5–127 (KEKRLKELNR…NSAALKFIPK (123 aa)) enclose the MsrB domain. Cys-116 (nucleophile) is an active-site residue.

It belongs to the MsrB Met sulfoxide reductase family.

The catalysed reaction is L-methionyl-[protein] + [thioredoxin]-disulfide + H2O = L-methionyl-(R)-S-oxide-[protein] + [thioredoxin]-dithiol. The polypeptide is Peptide methionine sulfoxide reductase MsrB (Bacillus pumilus (strain SAFR-032)).